The primary structure comprises 122 residues: MIQMQTTLGVADNSGARQVQCIKVLGGSRRRYAGIGDIIKVSVKDAIPRGRVKKGEVYNAVVVRTRRGVRRPDGSVIRFDGNAAVLLNNQLQPIGTRVFGPVTRELRSEKFMRIISLAPEVL.

It belongs to the universal ribosomal protein uL14 family. Part of the 50S ribosomal subunit. Forms a cluster with proteins L3 and L19. In the 70S ribosome, L14 and L19 interact and together make contacts with the 16S rRNA in bridges B5 and B8.

Its function is as follows. Binds to 23S rRNA. Forms part of two intersubunit bridges in the 70S ribosome. This is Large ribosomal subunit protein uL14 from Alkalilimnicola ehrlichii (strain ATCC BAA-1101 / DSM 17681 / MLHE-1).